Consider the following 329-residue polypeptide: DNA-directed RNA polymerase subunit alpha (329 aa).

The interval 1–235 (MQGSVTEFLK…EQLEAFVDLR (235 aa)) is alpha N-terminal domain (alpha-NTD). The interval 249 to 329 (FDPILLRPVD…DWPPASIADE (81 aa)) is alpha C-terminal domain (alpha-CTD).

The protein belongs to the RNA polymerase alpha chain family. In terms of assembly, homodimer. The RNAP catalytic core consists of 2 alpha, 1 beta, 1 beta' and 1 omega subunit. When a sigma factor is associated with the core the holoenzyme is formed, which can initiate transcription.

The catalysed reaction is RNA(n) + a ribonucleoside 5'-triphosphate = RNA(n+1) + diphosphate. DNA-dependent RNA polymerase catalyzes the transcription of DNA into RNA using the four ribonucleoside triphosphates as substrates. This is DNA-directed RNA polymerase subunit alpha from Salmonella choleraesuis (strain SC-B67).